The chain runs to 654 residues: tRNA 5-methylaminomethyl-2-thiouridine biosynthesis bifunctional protein MnmC (654 aa).

Residues 1–236 (MPTLLQHAQI…KWEVMSGAYV (236 aa)) are tRNA (mnm(5)s(2)U34)-methyltransferase. The segment at 262-654 (IGAGLAGSSS…FGLRRLIRGK (393 aa)) is FAD-dependent cmnm(5)s(2)U34 oxidoreductase.

In the N-terminal section; belongs to the methyltransferase superfamily. tRNA (mnm(5)s(2)U34)-methyltransferase family. This sequence in the C-terminal section; belongs to the DAO family. It depends on FAD as a cofactor.

The protein localises to the cytoplasm. The enzyme catalyses 5-aminomethyl-2-thiouridine(34) in tRNA + S-adenosyl-L-methionine = 5-methylaminomethyl-2-thiouridine(34) in tRNA + S-adenosyl-L-homocysteine + H(+). Functionally, catalyzes the last two steps in the biosynthesis of 5-methylaminomethyl-2-thiouridine (mnm(5)s(2)U) at the wobble position (U34) in tRNA. Catalyzes the FAD-dependent demodification of cmnm(5)s(2)U34 to nm(5)s(2)U34, followed by the transfer of a methyl group from S-adenosyl-L-methionine to nm(5)s(2)U34, to form mnm(5)s(2)U34. The chain is tRNA 5-methylaminomethyl-2-thiouridine biosynthesis bifunctional protein MnmC from Pseudomonas putida (strain ATCC 47054 / DSM 6125 / CFBP 8728 / NCIMB 11950 / KT2440).